Here is a 320-residue protein sequence, read N- to C-terminus: Probable cell division protein WhiA (320 aa).

The segment at residues 276–310 is a DNA-binding region (H-T-H motif); that stretch reads TLKELGEMVESGKVSKSGVNHRLRKIDELAEKLRA.

It belongs to the WhiA family.

Involved in cell division and chromosome segregation. The sequence is that of Probable cell division protein WhiA from Halalkalibacterium halodurans (strain ATCC BAA-125 / DSM 18197 / FERM 7344 / JCM 9153 / C-125) (Bacillus halodurans).